Reading from the N-terminus, the 350-residue chain is Eukaryotic translation initiation factor 3 subunit I (350 aa).

WD repeat units follow at residues 8–49 (GHER…GTLE), 51–89 (HQGVIWSIDVDPDTHLCATGGGDLAIKLWKVETGKCVFT), 91–135 (ESPS…ESLT), 149–188 (QDGAKATVAGWSANGEFIISGHDDGYIYKYDAQTGEAVNS), 198–240 (EKNV…KVYK), and 296–335 (GHFGPLNTVAVHPDGTGYSSGGEDGFIRVHTFDKSYFDFY).

It belongs to the eIF-3 subunit I family. Component of the eukaryotic translation initiation factor 3 (eIF-3) complex.

It localises to the cytoplasm. Component of the eukaryotic translation initiation factor 3 (eIF-3) complex, which is involved in protein synthesis of a specialized repertoire of mRNAs and, together with other initiation factors, stimulates binding of mRNA and methionyl-tRNAi to the 40S ribosome. The eIF-3 complex specifically targets and initiates translation of a subset of mRNAs involved in cell proliferation. This Scheffersomyces stipitis (strain ATCC 58785 / CBS 6054 / NBRC 10063 / NRRL Y-11545) (Yeast) protein is Eukaryotic translation initiation factor 3 subunit I.